A 384-amino-acid chain; its full sequence is Sphingosine kinase 1 (384 aa).

The DAGKc domain occupies 12-159; sequence PRPCRVLVLL…MNLLSLHTAS (148 aa). ATP contacts are provided by residues 22–24 and 54–58; these read NPR and TERRN. Residue 79 to 82 coordinates substrate; it reads SGDG. D81 functions as the Proton donor/acceptor in the catalytic mechanism. ATP-binding positions include E86 and 111–113; that span reads GSG. Short sequence motifs (nuclear export signal) lie at residues 147 to 155 and 161 to 169; these read LSPMNLLSL and LRLFSVLSL. D178 provides a ligand contact to substrate. ATP is bound by residues R185 and R191. T193 carries the post-translational modification Phosphothreonine. At S225 the chain carries Phosphoserine. 341–343 serves as a coordination point for ATP; it reads DGE.

As to quaternary structure, interacts with ACY1. Binds to calmodulin. Interacts with SPHKAP. Interacts with CIB1, the interaction occurs in a calcium-dependent manner. Interacts with TRAF2. Interacts with EEF1A1; the interaction enhances SPHK1 kinase activity. Mg(2+) serves as cofactor. In terms of tissue distribution, widely expressed with highest levels in adult liver, kidney, heart and skeletal muscle. Expressed in brain cortex (at protein level).

The protein localises to the cytoplasm. It localises to the nucleus. It is found in the cell membrane. The protein resides in the endosome membrane. Its subcellular location is the membrane. The protein localises to the clathrin-coated pit. It localises to the synapse. It catalyses the reaction a sphingoid base + ATP = a sphingoid 1-phosphate + ADP + H(+). The enzyme catalyses L-seryl-[protein] + acetyl-CoA = O-acetyl-L-seryl-[protein] + CoA. The catalysed reaction is sphinganine + ATP = sphinganine 1-phosphate + ADP + H(+). It carries out the reaction sphing-4-enine + ATP = sphing-4-enine 1-phosphate + ADP + H(+). It catalyses the reaction 1-O-hexadecyl-2-amino-sn-glycerol + ATP = 1-O-hexadecyl-2-desoxy-2-amino-sn-glycero-3-phosphate + ADP + H(+). Acetyltransferase activity increases in presence of the kinase substrate, sphingosine. In Purkinje cells, kinase activity on sphingosine increases in presence of VEGFA. In neurons, kinase activity increases during the first 24h in presence of Amyloid-beta protein 42 to decrease after 96h. Its function is as follows. Catalyzes the phosphorylation of sphingosine to form sphingosine 1-phosphate (SPP), a lipid mediator with both intra- and extracellular functions. Also acts on D-erythro-sphingosine and to a lesser extent sphinganine, but not other lipids, such as D,L-threo-dihydrosphingosine, N,N-dimethylsphingosine, diacylglycerol, ceramide, or phosphatidylinositol. In contrast to proapoptotic SPHK2, has a negative effect on intracellular ceramide levels, enhances cell growth and inhibits apoptosis. Involved in the regulation of inflammatory response and neuroinflammation. Via the product sphingosine 1-phosphate, stimulates TRAF2 E3 ubiquitin ligase activity, and promotes activation of NF-kappa-B in response to TNF signaling leading to IL17 secretion. In response to TNF and in parallel to NF-kappa-B activation, negatively regulates RANTES induction through p38 MAPK signaling pathway. Involved in endocytic membrane trafficking induced by sphingosine, recruited to dilate endosomes, also plays a role on later stages of endosomal maturation and membrane fusion independently of its kinase activity. In Purkinje cells, seems to be also involved in the regulation of autophagosome-lysosome fusion upon VEGFA. Has serine acetyltransferase activity on PTGS2/COX2 in an acetyl-CoA dependent manner. The acetyltransferase activity increases in presence of the kinase substrate, sphingosine. During neuroinflammation, through PTGS2 acetylation, promotes neuronal secretion of specialized preresolving mediators (SPMs), especially 15-R-lipoxin A4, which results in an increase of phagocytic microglia. This is Sphingosine kinase 1 from Homo sapiens (Human).